The primary structure comprises 391 residues: Protein-glutamate methylesterase/protein-glutamine glutaminase (391 aa).

In terms of domain architecture, Response regulatory spans 4-121 (KVLVVDDSSF…ARNNEDAIKL (118 aa)). 4-aspartylphosphate is present on D55. Residues 197-391 (SGKHYQLVAI…IRLKTEVGCG (195 aa)) enclose the CheB-type methylesterase domain. Catalysis depends on residues S209, H236, and D333.

Belongs to the CheB family. Post-translationally, phosphorylated by CheA. Phosphorylation of the N-terminal regulatory domain activates the methylesterase activity.

The protein localises to the cytoplasm. It carries out the reaction [protein]-L-glutamate 5-O-methyl ester + H2O = L-glutamyl-[protein] + methanol + H(+). The enzyme catalyses L-glutaminyl-[protein] + H2O = L-glutamyl-[protein] + NH4(+). Involved in chemotaxis. Part of a chemotaxis signal transduction system that modulates chemotaxis in response to various stimuli. Catalyzes the demethylation of specific methylglutamate residues introduced into the chemoreceptors (methyl-accepting chemotaxis proteins or MCP) by CheR. Also mediates the irreversible deamidation of specific glutamine residues to glutamic acid. This chain is Protein-glutamate methylesterase/protein-glutamine glutaminase, found in Pseudoalteromonas translucida (strain TAC 125).